The sequence spans 513 residues: 2-isopropylmalate synthase (513 aa).

The Pyruvate carboxyltransferase domain occupies 5–268 (LIIFDTTLRD…DIGVDTTQIV (264 aa)). Mn(2+) is bound by residues D14, H202, H204, and N239. Positions 394-513 (RFISLSQRSE…KAVQKINPQI (120 aa)) are regulatory domain.

This sequence belongs to the alpha-IPM synthase/homocitrate synthase family. LeuA type 1 subfamily. Homodimer. It depends on Mn(2+) as a cofactor.

It localises to the cytoplasm. The enzyme catalyses 3-methyl-2-oxobutanoate + acetyl-CoA + H2O = (2S)-2-isopropylmalate + CoA + H(+). It functions in the pathway amino-acid biosynthesis; L-leucine biosynthesis; L-leucine from 3-methyl-2-oxobutanoate: step 1/4. Catalyzes the condensation of the acetyl group of acetyl-CoA with 3-methyl-2-oxobutanoate (2-ketoisovalerate) to form 3-carboxy-3-hydroxy-4-methylpentanoate (2-isopropylmalate). This chain is 2-isopropylmalate synthase, found in Cupriavidus necator (strain ATCC 17699 / DSM 428 / KCTC 22496 / NCIMB 10442 / H16 / Stanier 337) (Ralstonia eutropha).